We begin with the raw amino-acid sequence, 200 residues long: Phospholipase A2 inhibitor gamma subunit B (200 aa).

The N-terminal stretch at 1 to 19 (MKSFLFCCLLGTFLAIGMC) is a signal peptide. Disulfide bonds link C22-C46, C25-C32, C39-C67, C73-C94, C95-C100, C120-C145, C138-C165, and C171-C191. N33 carries N-linked (GlcNAc...) asparagine glycosylation.

Belongs to the CNF-like-inhibitor family. As to quaternary structure, heterodimer of subunit A and subunit B. As to expression, expressed by the liver.

Its subcellular location is the secreted. Functionally, inhibits the enzymatic activity of phospholipase A2 (PA2). The chain is Phospholipase A2 inhibitor gamma subunit B from Gloydius brevicaudus siniticus (Chinese mamushi).